We begin with the raw amino-acid sequence, 625 residues long: 1-deoxy-D-xylulose-5-phosphate synthase (625 aa).

Residues H80 and 121 to 123 each bind thiamine diphosphate; that span reads GHS. A Mg(2+)-binding site is contributed by D152. Thiamine diphosphate-binding positions include 153–154, N181, Y288, and E370; that span reads GA. N181 contacts Mg(2+).

This sequence belongs to the transketolase family. DXPS subfamily. In terms of assembly, homodimer. The cofactor is Mg(2+). Thiamine diphosphate serves as cofactor.

The enzyme catalyses D-glyceraldehyde 3-phosphate + pyruvate + H(+) = 1-deoxy-D-xylulose 5-phosphate + CO2. It functions in the pathway metabolic intermediate biosynthesis; 1-deoxy-D-xylulose 5-phosphate biosynthesis; 1-deoxy-D-xylulose 5-phosphate from D-glyceraldehyde 3-phosphate and pyruvate: step 1/1. Catalyzes the acyloin condensation reaction between C atoms 2 and 3 of pyruvate and glyceraldehyde 3-phosphate to yield 1-deoxy-D-xylulose-5-phosphate (DXP). The protein is 1-deoxy-D-xylulose-5-phosphate synthase of Alteromonas mediterranea (strain DSM 17117 / CIP 110805 / LMG 28347 / Deep ecotype).